We begin with the raw amino-acid sequence, 485 residues long: Glutamate--tRNA ligase (485 aa).

Residues 11 to 21 carry the 'HIGH' region motif; the sequence is PSPTGYMHVGN. Cysteine 108, cysteine 110, cysteine 135, and aspartate 137 together coordinate Zn(2+). Residues 252 to 256 carry the 'KMSKS' region motif; the sequence is KLSKR. Lysine 255 is an ATP binding site.

It belongs to the class-I aminoacyl-tRNA synthetase family. Glutamate--tRNA ligase type 1 subfamily. In terms of assembly, monomer. It depends on Zn(2+) as a cofactor.

The protein localises to the cytoplasm. It catalyses the reaction tRNA(Glu) + L-glutamate + ATP = L-glutamyl-tRNA(Glu) + AMP + diphosphate. Its function is as follows. Catalyzes the attachment of glutamate to tRNA(Glu) in a two-step reaction: glutamate is first activated by ATP to form Glu-AMP and then transferred to the acceptor end of tRNA(Glu). This Clostridium botulinum (strain ATCC 19397 / Type A) protein is Glutamate--tRNA ligase.